Consider the following 111-residue polypeptide: Prefoldin subunit 2 (111 aa).

2 coiled-coil regions span residues 1–36 and 72–92; these read MEQR…KDEH and LETK…TLIQ.

It belongs to the prefoldin subunit beta family. As to quaternary structure, heterohexamer of two PFD-alpha type and four PFD-beta type subunits.

It is found in the cytoplasm. Functionally, binds specifically to cytosolic chaperonin (c-CPN) and transfers target proteins to it. Binds to nascent polypeptide chain and promotes folding in an environment in which there are many competing pathways for nonnative proteins. The polypeptide is Prefoldin subunit 2 (GIM4) (Saccharomyces cerevisiae (strain ATCC 204508 / S288c) (Baker's yeast)).